Reading from the N-terminus, the 272-residue chain is Dihydropteroate synthase (272 aa).

The Pterin-binding domain maps to 1–256 (MIKTKIMGIL…NVLLNTRLAQ (256 aa)). Asn11 provides a ligand contact to Mg(2+). Residues Thr51, Asp89, Asn108, Asp172, Lys208, and 244–246 (RVH) contribute to the (7,8-dihydropterin-6-yl)methyl diphosphate site.

It belongs to the DHPS family. In terms of assembly, homodimer. It depends on Mg(2+) as a cofactor.

It carries out the reaction (7,8-dihydropterin-6-yl)methyl diphosphate + 4-aminobenzoate = 7,8-dihydropteroate + diphosphate. Its pathway is cofactor biosynthesis; tetrahydrofolate biosynthesis; 7,8-dihydrofolate from 2-amino-4-hydroxy-6-hydroxymethyl-7,8-dihydropteridine diphosphate and 4-aminobenzoate: step 1/2. Functionally, catalyzes the condensation of para-aminobenzoate (pABA) with 6-hydroxymethyl-7,8-dihydropterin diphosphate (DHPt-PP) to form 7,8-dihydropteroate (H2Pte), the immediate precursor of folate derivatives. In Staphylococcus epidermidis (strain ATCC 12228 / FDA PCI 1200), this protein is Dihydropteroate synthase (folP).